The sequence spans 243 residues: Triosephosphate isomerase (243 aa).

9–11 (NWK) contacts substrate. His-96 (electrophile) is an active-site residue. The active-site Proton acceptor is the Glu-165. Substrate-binding positions include Gly-171, Ser-204, and 225 to 226 (GG).

Belongs to the triosephosphate isomerase family. In terms of assembly, homodimer.

It is found in the cytoplasm. The enzyme catalyses D-glyceraldehyde 3-phosphate = dihydroxyacetone phosphate. Its pathway is carbohydrate biosynthesis; gluconeogenesis. The protein operates within carbohydrate degradation; glycolysis; D-glyceraldehyde 3-phosphate from glycerone phosphate: step 1/1. Involved in the gluconeogenesis. Catalyzes stereospecifically the conversion of dihydroxyacetone phosphate (DHAP) to D-glyceraldehyde-3-phosphate (G3P). This is Triosephosphate isomerase from Nostoc punctiforme (strain ATCC 29133 / PCC 73102).